The sequence spans 261 residues: Endomucin (261 aa).

The first 18 residues, 1-18 (MELLQVTILFLLPSICSS), serve as a signal peptide directing secretion. 4 N-linked (GlcNAc...) asparagine glycosylation sites follow: N19, N28, N98, and N104. The Extracellular portion of the chain corresponds to 19-190 (NSTGVLEAAN…TSATSRSYSS (172 aa)). Polar residues-rich tracts occupy residues 118-134 (TLQS…SIKT) and 146-171 (ASPS…SQVI). The tract at residues 118–183 (TLQSSKPKTE…EGGKNASTSA (66 aa)) is disordered. 2 N-linked (GlcNAc...) asparagine glycosylation sites follow: N164 and N178. The helical transmembrane segment at 191-211 (IILPVVIALIVITLSVFVLVG) threads the bilayer. Over 212 to 261 (LYRMCWKADPGTPENGNDQPQSDKESVKLLTVKTISHESGEHSAQGKTKN) the chain is Cytoplasmic. S237 carries the phosphoserine modification.

Post-translationally, highly O-glycosylated. Sialic acid-rich glycoprotein. In terms of tissue distribution, expressed in heart, kidney and lung.

It localises to the cell membrane. It is found in the membrane. Its subcellular location is the secreted. Its function is as follows. Endothelial sialomucin, also called endomucin or mucin-like sialoglycoprotein, which interferes with the assembly of focal adhesion complexes and inhibits interaction between cells and the extracellular matrix. This Homo sapiens (Human) protein is Endomucin (EMCN).